Here is a 559-residue protein sequence, read N- to C-terminus: Potassium-transporting ATPase potassium-binding subunit (559 aa).

Transmembrane regions (helical) follow at residues 7–27 (LLIASFLLILLVLAKPLGSGL), 63–83 (LLALLTLNLLGLSILFCLLFW), 132–152 (GLTVQNFLSAATGIAVVFALI), 170–190 (LVRITLWILFPVALIIALFFI), 253–273 (MVQMLAIFLIPAALCFAFGEA), 283–303 (LLWAMSFIFVVCVAVVMWAEV), 327–347 (FGVLASSLFAVVTTAASCGAV), 356–376 (ALGGMVPMWLMQIGEVVFGGV), 379–399 (GLYGMLLFVLLAVFIAGLMIG), 416–436 (MTALAILVTPMLVLLGSALAM), 484–504 (LLAFCMFVGRFGVIIPVMAIA), and 524–544 (GALFIGLLIGTVLLVGALTFI).

Belongs to the KdpA family. In terms of assembly, the system is composed of three essential subunits: KdpA, KdpB and KdpC.

It is found in the cell inner membrane. Part of the high-affinity ATP-driven potassium transport (or Kdp) system, which catalyzes the hydrolysis of ATP coupled with the electrogenic transport of potassium into the cytoplasm. This subunit binds the periplasmic potassium ions and delivers the ions to the membrane domain of KdpB through an intramembrane tunnel. This chain is Potassium-transporting ATPase potassium-binding subunit, found in Salmonella arizonae (strain ATCC BAA-731 / CDC346-86 / RSK2980).